The sequence spans 27 residues: Kunitz-type serine protease inhibitor 3 (27 aa).

One can recognise a BPTI/Kunitz inhibitor domain in the interval Glu1–Val27.

The protein localises to the secreted. Functionally, inhibits bovine trypsin and human neutrophil elastase. The protein is Kunitz-type serine protease inhibitor 3 of Rhipicephalus microplus (Cattle tick).